Consider the following 186-residue polypeptide: Casparian strip membrane protein 3 (186 aa).

Over Met-1–Ser-26 the chain is Cytoplasmic. The chain crosses the membrane as a helical span at residues Ile-27–Met-47. At Gly-48–Arg-74 the chain is on the extracellular side. Residues Phe-75 to Ile-95 traverse the membrane as a helical segment. The Cytoplasmic portion of the chain corresponds to Leu-96–Arg-107. Residues Val-108–Ala-128 form a helical membrane-spanning segment. Over Ala-129–Ser-161 the chain is Extracellular. A helical transmembrane segment spans residues Leu-162–Val-182. The Cytoplasmic segment spans residues Leu-183–Arg-186.

This sequence belongs to the Casparian strip membrane proteins (CASP) family. In terms of assembly, homodimer and heterodimers.

The protein localises to the cell membrane. Its function is as follows. Regulates membrane-cell wall junctions and localized cell wall deposition. Required for establishment of the Casparian strip membrane domain (CSD) and the subsequent formation of Casparian strips, a cell wall modification of the root endodermis that determines an apoplastic barrier between the intraorganismal apoplasm and the extraorganismal apoplasm and prevents lateral diffusion. This is Casparian strip membrane protein 3 from Medicago truncatula (Barrel medic).